The sequence spans 607 residues: Elongation factor 4 (607 aa).

Residues 11-193 (SKIRNFSIIA…QIVEKVPAPT (183 aa)) enclose the tr-type G domain. GTP is bound by residues 23–28 (DHGKST) and 140–143 (NKID).

The protein belongs to the TRAFAC class translation factor GTPase superfamily. Classic translation factor GTPase family. LepA subfamily.

The protein resides in the cell membrane. The enzyme catalyses GTP + H2O = GDP + phosphate + H(+). In terms of biological role, required for accurate and efficient protein synthesis under certain stress conditions. May act as a fidelity factor of the translation reaction, by catalyzing a one-codon backward translocation of tRNAs on improperly translocated ribosomes. Back-translocation proceeds from a post-translocation (POST) complex to a pre-translocation (PRE) complex, thus giving elongation factor G a second chance to translocate the tRNAs correctly. Binds to ribosomes in a GTP-dependent manner. The chain is Elongation factor 4 from Bacillus mycoides (strain KBAB4) (Bacillus weihenstephanensis).